Reading from the N-terminus, the 536-residue chain is UDP-N-acetylmuramate--L-alanine ligase (536 aa).

133-139 lines the ATP pocket; sequence GSSGKTT.

This sequence belongs to the MurCDEF family.

The protein resides in the cytoplasm. It catalyses the reaction UDP-N-acetyl-alpha-D-muramate + L-alanine + ATP = UDP-N-acetyl-alpha-D-muramoyl-L-alanine + ADP + phosphate + H(+). The protein operates within cell wall biogenesis; peptidoglycan biosynthesis. Functionally, cell wall formation. The chain is UDP-N-acetylmuramate--L-alanine ligase from Wolbachia sp. subsp. Brugia malayi (strain TRS).